We begin with the raw amino-acid sequence, 152 residues long: D-aminoacyl-tRNA deacylase (152 aa).

Residues 142–143 (GP) carry the Gly-cisPro motif, important for rejection of L-amino acids motif.

The protein belongs to the DTD family. Homodimer.

The protein localises to the cytoplasm. It catalyses the reaction glycyl-tRNA(Ala) + H2O = tRNA(Ala) + glycine + H(+). It carries out the reaction a D-aminoacyl-tRNA + H2O = a tRNA + a D-alpha-amino acid + H(+). Functionally, an aminoacyl-tRNA editing enzyme that deacylates mischarged D-aminoacyl-tRNAs. Also deacylates mischarged glycyl-tRNA(Ala), protecting cells against glycine mischarging by AlaRS. Acts via tRNA-based rather than protein-based catalysis; rejects L-amino acids rather than detecting D-amino acids in the active site. By recycling D-aminoacyl-tRNA to D-amino acids and free tRNA molecules, this enzyme counteracts the toxicity associated with the formation of D-aminoacyl-tRNA entities in vivo and helps enforce protein L-homochirality. This is D-aminoacyl-tRNA deacylase from Burkholderia cenocepacia (strain ATCC BAA-245 / DSM 16553 / LMG 16656 / NCTC 13227 / J2315 / CF5610) (Burkholderia cepacia (strain J2315)).